The sequence spans 448 residues: Putative vacuolar cation/proton exchanger 6 (448 aa).

Residues 31–81 are Cytoplasmic-facing; it reads MGLVNEVELKSLLEQETDSPQTNAASLMEQGSLRERRAKAPRNSVVQSFKI. Residues 82-102 form a helical membrane-spanning segment; sequence VILSNKLNLLLPFGPLAILVH. Topologically, residues 103 to 109 are extracellular; sequence YLTDNKG. Residues 110-130 traverse the membrane as a helical segment; the sequence is WFFLLSLVGITPLAERLGYAT. At 131 to 141 the chain is on the cytoplasmic side; the sequence is EQLSCYTGATV. The helical transmembrane segment at 142–162 threads the bilayer; it reads GGLLNATFGNVIELIISIIAL. The tract at residues 150-185 is cation selection; sequence GNVIELIISIIALKNGMIRVVQLTLLGSILSNILLV. Over 163 to 178 the chain is Extracellular; the sequence is KNGMIRVVQLTLLGSI. A helical membrane pass occupies residues 179-199; sequence LSNILLVLGCAFFCGGLVFPG. The Cytoplasmic portion of the chain corresponds to 200 to 209; that stretch reads KDQVFDKRNA. Residues 210-230 form a helical membrane-spanning segment; it reads VVSSGMLLMAVMGLLFPTFLH. At 231–243 the chain is on the extracellular side; the sequence is YTHSEVHAGSSEL. A helical transmembrane segment spans residues 244 to 264; sequence ALSRFISCIMLVAYAAYLFFQ. The Cytoplasmic portion of the chain corresponds to 265–295; the sequence is LKSQPSFYTEKTNQNEETSNDDEDPEISKWE. The chain crosses the membrane as a helical span at residues 296–316; the sequence is AIIWLSIFTAWVSLLSGYLVD. Residues 317–334 are Extracellular-facing; that stretch reads AIEGTSVSWKIPISFISV. A helical membrane pass occupies residues 335–355; the sequence is ILLPIVGNAAEHAGAIMFAMK. The cation selection stretch occupies residues 341-376; sequence GNAAEHAGAIMFAMKDKLDLSLGVAIGSSIQISMFA. Topologically, residues 356–363 are cytoplasmic; sequence DKLDLSLG. Residues 364-384 traverse the membrane as a helical segment; that stretch reads VAIGSSIQISMFAVPFCVVIG. Topologically, residues 385–393 are extracellular; the sequence is WMMGAQMDL. A helical membrane pass occupies residues 394-414; sequence NLQLFETATLLITVIVVAFFL. At 415–425 the chain is on the cytoplasmic side; the sequence is QLEGTSNYFKR. A helical membrane pass occupies residues 426 to 446; the sequence is LMLILCYLIVAASFFVHEDPH. Over 447-448 the chain is Extracellular; it reads QG.

It belongs to the Ca(2+):cation antiporter (CaCA) (TC 2.A.19) family. Cation/proton exchanger (CAX) subfamily.

The protein resides in the vacuole membrane. In terms of biological role, vacuolar cation/proton exchanger (CAX). Translocates Ca(2+) and other metal ions into vacuoles using the proton gradient formed by H(+)-ATPase and H(+)-pyrophosphatase. This chain is Putative vacuolar cation/proton exchanger 6 (CAX6), found in Arabidopsis thaliana (Mouse-ear cress).